Consider the following 453-residue polypeptide: Bifunctional protein GlmU (453 aa).

The interval 1-226 is pyrophosphorylase; that stretch reads MSFSAVILAA…PIEVEGVNNR (226 aa). UDP-N-acetyl-alpha-D-glucosamine is bound by residues 8 to 11, lysine 22, glutamine 73, 78 to 79, 100 to 102, glycine 137, glutamate 151, asparagine 166, and asparagine 224; these read LAAG, GT, and YGD. Aspartate 102 lines the Mg(2+) pocket. Mg(2+) is bound at residue asparagine 224. Positions 227–247 are linker; it reads IQLARLERAYQAMQAERLLEQ. The N-acetyltransferase stretch occupies residues 248–453; the sequence is GVMLRDPSRF…KGWKRPVKQK (206 aa). UDP-N-acetyl-alpha-D-glucosamine-binding residues include arginine 330 and lysine 348. Residue histidine 360 is the Proton acceptor of the active site. Residues tyrosine 363 and asparagine 374 each contribute to the UDP-N-acetyl-alpha-D-glucosamine site. Residues alanine 377, 383-384, serine 402, alanine 420, and arginine 437 contribute to the acetyl-CoA site; that span reads NY.

It in the N-terminal section; belongs to the N-acetylglucosamine-1-phosphate uridyltransferase family. The protein in the C-terminal section; belongs to the transferase hexapeptide repeat family. In terms of assembly, homotrimer. Mg(2+) is required as a cofactor.

The protein localises to the cytoplasm. It catalyses the reaction alpha-D-glucosamine 1-phosphate + acetyl-CoA = N-acetyl-alpha-D-glucosamine 1-phosphate + CoA + H(+). It carries out the reaction N-acetyl-alpha-D-glucosamine 1-phosphate + UTP + H(+) = UDP-N-acetyl-alpha-D-glucosamine + diphosphate. It participates in nucleotide-sugar biosynthesis; UDP-N-acetyl-alpha-D-glucosamine biosynthesis; N-acetyl-alpha-D-glucosamine 1-phosphate from alpha-D-glucosamine 6-phosphate (route II): step 2/2. Its pathway is nucleotide-sugar biosynthesis; UDP-N-acetyl-alpha-D-glucosamine biosynthesis; UDP-N-acetyl-alpha-D-glucosamine from N-acetyl-alpha-D-glucosamine 1-phosphate: step 1/1. It functions in the pathway bacterial outer membrane biogenesis; LPS lipid A biosynthesis. Its function is as follows. Catalyzes the last two sequential reactions in the de novo biosynthetic pathway for UDP-N-acetylglucosamine (UDP-GlcNAc). The C-terminal domain catalyzes the transfer of acetyl group from acetyl coenzyme A to glucosamine-1-phosphate (GlcN-1-P) to produce N-acetylglucosamine-1-phosphate (GlcNAc-1-P), which is converted into UDP-GlcNAc by the transfer of uridine 5-monophosphate (from uridine 5-triphosphate), a reaction catalyzed by the N-terminal domain. The sequence is that of Bifunctional protein GlmU from Photobacterium profundum (strain SS9).